The primary structure comprises 395 residues: S-adenosylmethionine synthase (395 aa).

Position 14 (His-14) interacts with ATP. Asp-16 provides a ligand contact to Mg(2+). Glu-42 contacts K(+). L-methionine-binding residues include Glu-55 and Gln-98. Positions 98–108 are flexible loop; it reads QSPDIALGVDK. Residues 174 to 176, 240 to 241, Asp-249, 255 to 256, Ala-272, and Lys-276 contribute to the ATP site; these read DGK, RF, and RK. Position 249 (Asp-249) interacts with L-methionine. Lys-280 provides a ligand contact to L-methionine.

The protein belongs to the AdoMet synthase family. As to quaternary structure, homotetramer; dimer of dimers. Requires Mg(2+) as cofactor. It depends on K(+) as a cofactor.

The protein resides in the cytoplasm. It carries out the reaction L-methionine + ATP + H2O = S-adenosyl-L-methionine + phosphate + diphosphate. It participates in amino-acid biosynthesis; S-adenosyl-L-methionine biosynthesis; S-adenosyl-L-methionine from L-methionine: step 1/1. Functionally, catalyzes the formation of S-adenosylmethionine (AdoMet) from methionine and ATP. The overall synthetic reaction is composed of two sequential steps, AdoMet formation and the subsequent tripolyphosphate hydrolysis which occurs prior to release of AdoMet from the enzyme. This chain is S-adenosylmethionine synthase, found in Thermotoga neapolitana (strain ATCC 49049 / DSM 4359 / NBRC 107923 / NS-E).